We begin with the raw amino-acid sequence, 629 residues long: uncharacterized protein (629 aa).

Catalysis depends on histidine 562, which acts as the Proton acceptor.

It belongs to the GMC oxidoreductase family. The cofactor is FAD.

This is an uncharacterized protein from Mycobacterium tuberculosis (strain CDC 1551 / Oshkosh).